Consider the following 443-residue polypeptide: D(2) dopamine receptor (443 aa).

Topologically, residues 1–37 (MDPLNLSWYDDDLERQNWSRPFNGSDGKADRPHYNYY) are extracellular. Residues Asn5, Asn17, and Asn23 are each glycosylated (N-linked (GlcNAc...) asparagine). Residues 38–60 (ATLLTLLIAVIVFGNVLVCMAVS) traverse the membrane as a helical segment. Residues 61–70 (REKALQTTTN) lie on the Cytoplasmic side of the membrane. A helical membrane pass occupies residues 71 to 93 (YLIVSLAVADLLVATLVMPWVVY). Over 94 to 108 (LEVVGEWKFSRIHCD) the chain is Extracellular. Cys107 and Cys182 form a disulfide bridge. The chain crosses the membrane as a helical span at residues 109-130 (IFVTLDVMMCTASILNLCAISI). The Cytoplasmic portion of the chain corresponds to 131–151 (DRYTAVAMPMLYNTRYSSKRR). The helical transmembrane segment at 152 to 172 (VTVMISIVWVLSFTISCPLLF) threads the bilayer. At 173 to 188 (GLNNADQNECIIANPA) the chain is on the extracellular side. Residues 189-213 (FVVYSSIVSFYVPFIVTLLVYIKIY) form a helical membrane-spanning segment. The interval 211 to 373 (KIYIVLRRRR…SQQKEKKATQ (163 aa)) is interaction with PPP1R9B. Over 214–373 (IVLRRRRKRV…SQQKEKKATQ (160 aa)) the chain is Cytoplasmic. Residues 281–332 (MEMLSSTSPPERTRYSPIPPSHHQLTLPDPSHHGLHSTPDSPAKPEKNGHAK) are disordered. Positions 323–332 (AKPEKNGHAK) are enriched in basic and acidic residues. A helical membrane pass occupies residues 374–395 (MLAIVLGVFIICWLPFFITHIL). Over 396–409 (NIHCDCNIPPVLYS) the chain is Extracellular. Cys399 and Cys401 are joined by a disulfide. A helical transmembrane segment spans residues 410–431 (AFTWLGYVNSAVNPIIYTTFNI). Over 432–443 (EFRKAFLKILHC) the chain is Cytoplasmic. Cys443 carries S-palmitoyl cysteine lipidation.

It belongs to the G-protein coupled receptor 1 family. In terms of assembly, forms homo- and heterooligomers with DRD4. The interaction with DRD4 may modulate agonist-induced downstream signaling. Interacts with CADPS and CADPS2. Interacts with GPRASP1, PPP1R9B and CLIC6. Interacts with ARRB2. Interacts with HTR2A. Interacts with GNAI2 isoform sGi2, the interaction allows the creation of an intracellular pool of DRD2 that can be released to cell surface upon agonist stimulation. Interacts with DRD1. Interacts with KCNA2. Palmitoylated. Palmitoylation which is required for proper localization to the plasma membrane and stability of the receptor could be carried on by ZDHHC4, ZDHHC3 and ZDHHC8. As to expression, expressed in the anterior pituitary gland.

The protein localises to the cell membrane. Its subcellular location is the golgi apparatus membrane. Dopamine receptor whose activity is mediated by G proteins which inhibit adenylyl cyclase. Positively regulates postnatal regression of retinal hyaloid vessels via suppression of VEGFR2/KDR activity, downstream of OPN5. The sequence is that of D(2) dopamine receptor (DRD2) from Homo sapiens (Human).